Here is a 297-residue protein sequence, read N- to C-terminus: Bifunctional protein FolD (297 aa).

NADP(+)-binding positions include 168 to 170, Thr195, and Val236; that span reads GRG.

The protein belongs to the tetrahydrofolate dehydrogenase/cyclohydrolase family. As to quaternary structure, homodimer.

It catalyses the reaction (6R)-5,10-methylene-5,6,7,8-tetrahydrofolate + NADP(+) = (6R)-5,10-methenyltetrahydrofolate + NADPH. It carries out the reaction (6R)-5,10-methenyltetrahydrofolate + H2O = (6R)-10-formyltetrahydrofolate + H(+). Its pathway is one-carbon metabolism; tetrahydrofolate interconversion. Catalyzes the oxidation of 5,10-methylenetetrahydrofolate to 5,10-methenyltetrahydrofolate and then the hydrolysis of 5,10-methenyltetrahydrofolate to 10-formyltetrahydrofolate. This chain is Bifunctional protein FolD, found in Bifidobacterium animalis subsp. lactis (strain AD011).